A 196-amino-acid chain; its full sequence is Pyridoxal 5'-phosphate synthase subunit PdxT (196 aa).

Residue 46-48 (GES) coordinates L-glutamine. The active-site Nucleophile is cysteine 78. L-glutamine is bound by residues arginine 105 and 133–134 (IR). Active-site charge relay system residues include histidine 169 and glutamate 171.

This sequence belongs to the glutaminase PdxT/SNO family. In the presence of PdxS, forms a dodecamer of heterodimers. Only shows activity in the heterodimer.

The catalysed reaction is aldehydo-D-ribose 5-phosphate + D-glyceraldehyde 3-phosphate + L-glutamine = pyridoxal 5'-phosphate + L-glutamate + phosphate + 3 H2O + H(+). It carries out the reaction L-glutamine + H2O = L-glutamate + NH4(+). It participates in cofactor biosynthesis; pyridoxal 5'-phosphate biosynthesis. Functionally, catalyzes the hydrolysis of glutamine to glutamate and ammonia as part of the biosynthesis of pyridoxal 5'-phosphate. The resulting ammonia molecule is channeled to the active site of PdxS. In Geobacillus kaustophilus (strain HTA426), this protein is Pyridoxal 5'-phosphate synthase subunit PdxT.